The following is an 829-amino-acid chain: Periplasmic nitrate reductase (829 aa).

Positions 1–30 (MKLSRRDFMKANAVAAAAAVAGVSAPTLAA) form a signal peptide, tat-type signal. The 57-residue stretch at 41–97 (ITWDKAPCRFCGTGCSVLVGSQDGRVVATQGDPDAPVNRGLNCIKGYFLSKIMYGQD) folds into the 4Fe-4S Mo/W bis-MGD-type domain. 4 residues coordinate [4Fe-4S] cluster: cysteine 48, cysteine 51, cysteine 55, and cysteine 83. Mo-bis(molybdopterin guanine dinucleotide) is bound by residues lysine 85, glutamine 152, asparagine 177, cysteine 181, 214–221 (WGSNMAEM), 245–249 (STFEH), 264–266 (QTD), methionine 374, glutamine 378, asparagine 484, 510–511 (SD), lysine 533, aspartate 560, and 719–728 (TGRVLEHWHT). Phenylalanine 795 lines the substrate pocket. Mo-bis(molybdopterin guanine dinucleotide) contacts are provided by asparagine 803 and lysine 820.

Belongs to the prokaryotic molybdopterin-containing oxidoreductase family. NasA/NapA/NarB subfamily. Component of the periplasmic nitrate reductase NapAB complex composed of NapA and NapB. Requires [4Fe-4S] cluster as cofactor. It depends on Mo-bis(molybdopterin guanine dinucleotide) as a cofactor. Post-translationally, predicted to be exported by the Tat system. The position of the signal peptide cleavage has not been experimentally proven.

The protein resides in the periplasm. The catalysed reaction is 2 Fe(II)-[cytochrome] + nitrate + 2 H(+) = 2 Fe(III)-[cytochrome] + nitrite + H2O. Functionally, catalytic subunit of the periplasmic nitrate reductase complex NapAB. Receives electrons from NapB and catalyzes the reduction of nitrate to nitrite. The protein is Periplasmic nitrate reductase of Aeromonas hydrophila subsp. hydrophila (strain ATCC 7966 / DSM 30187 / BCRC 13018 / CCUG 14551 / JCM 1027 / KCTC 2358 / NCIMB 9240 / NCTC 8049).